The sequence spans 317 residues: Melanocyte-stimulating hormone receptor (317 aa).

Residues 1-37 are Extracellular-facing; sequence MVWQGPQRRLLGSLNGTSPATPHFELAANQTGPRCLE. N-linked (GlcNAc...) asparagine glycosylation is found at N15 and N29. Residues 38–63 form a helical membrane-spanning segment; the sequence is VSIPNGLFLSLGLVSVVENVLVVAAI. Over 64–72 the chain is Cytoplasmic; that stretch reads AKNRNLHSP. The helical transmembrane segment at 73-93 threads the bilayer; it reads MYYFIGCLAVSDLLVSVTNVL. Topologically, residues 94–118 are extracellular; sequence ETAVMLLVEAGALAAQAAVVQQLDD. Residues 119-140 traverse the membrane as a helical segment; it reads IIDVLICGSMVSSLCFLGAIAV. At 141 to 163 the chain is on the cytoplasmic side; it reads DRYLSIFYALRYHSIVTLPRAWR. Residues 164-183 traverse the membrane as a helical segment; it reads AISAIWVASVLSSTLFIAYY. Residues 184 to 191 lie on the Extracellular side of the membrane; it reads NHTAVLLC. A helical membrane pass occupies residues 192–211; it reads LVSFFVAMLVLMAVLYVHML. Residues 212–240 lie on the Cytoplasmic side of the membrane; it reads ARARQHARGIARLRKRQHSVHQGFGLKGA. A helical transmembrane segment spans residues 241–266; that stretch reads ATLTILLGIFFLCWGPFFLHLSLMVL. Topologically, residues 267 to 279 are extracellular; the sequence is CPQHPICGCVFQN. The chain crosses the membrane as a helical span at residues 280-300; the sequence is FNLFLTLIICNSIIDPFIYAF. The Cytoplasmic segment spans residues 301-317; sequence RSQELRKTLQEVVLCSW. The S-palmitoyl cysteine moiety is linked to residue C315.

This sequence belongs to the G-protein coupled receptor 1 family. In terms of assembly, interacts with MGRN1, but does not undergo MGRN1-mediated ubiquitination; this interaction competes with GNAS-binding and thus inhibits agonist-induced cAMP production. Interacts with OPN3; the interaction results in a decrease in MC1R-mediated cAMP signaling and ultimately a decrease in melanin production in melanocytes.

The protein localises to the cell membrane. Receptor for MSH (alpha, beta and gamma) and ACTH. The activity of this receptor is mediated by G proteins which activate adenylate cyclase. Mediates melanogenesis, the production of eumelanin (black/brown) and phaeomelanin (red/yellow), via regulation of cAMP signaling in melanocytes. This Canis lupus familiaris (Dog) protein is Melanocyte-stimulating hormone receptor (MC1R).